The chain runs to 154 residues: Large ribosomal subunit protein uL13 (154 aa).

Belongs to the universal ribosomal protein uL13 family. As to quaternary structure, part of the 50S ribosomal subunit.

In terms of biological role, this protein is one of the early assembly proteins of the 50S ribosomal subunit, although it is not seen to bind rRNA by itself. It is important during the early stages of 50S assembly. This Rhizobium etli (strain CIAT 652) protein is Large ribosomal subunit protein uL13.